Consider the following 797-residue polypeptide: Kinesin-like protein Klp68D (797 aa).

In terms of domain architecture, Kinesin motor spans 19–344; it reads CVQVVVRCRP…LRYASRAKSI (326 aa). Position 106-113 (106-113) interacts with ATP; that stretch reads GQTGTGKT. Residues 350–384 are a coiled coil; that stretch reads KNEDPQDAKLKEYQEEIERLKRLIAPQQQQRSEKQ. Disordered regions lie at residues 371-450, 610-656, and 722-797; these read RLIA…ELER, SSFP…PSSL, and ANSS…LVNK. Basic residues predominate over residues 386-396; that stretch reads TIKKQRVKKPK. Over residues 417 to 431 the composition is skewed to acidic residues; sequence QVDEDRDSDGDGAES. Residues 432-450 show a composition bias toward basic and acidic residues; sequence ESDKENEAEVAKSNEELER. A coiled-coil region spans residues 432–580; sequence ESDKENEAEV…LVKELKRQLL (149 aa). Residues 626–638 show a composition bias toward basic residues; it reads GYRRPVSHPQRRR. Residues 782–791 are compositionally biased toward low complexity; that stretch reads KKPASAYPKA.

Belongs to the TRAFAC class myosin-kinesin ATPase superfamily. Kinesin family. Kinesin II subfamily.

Its subcellular location is the cytoplasm. The protein resides in the cytoskeleton. Functionally, plus-end directed microtubule motor that may be used for anterograde axonal transport and could conceivably move cargos in fly neurons different than those moved by kinesin heavy chain or other plus-end directed motors. The polypeptide is Kinesin-like protein Klp68D (Drosophila pseudoobscura pseudoobscura (Fruit fly)).